Reading from the N-terminus, the 336-residue chain is Izumo sperm-egg fusion protein 1 (336 aa).

Residues 1–16 (MTLPILLGWFLTLCSS) form the signal peptide. The Ig-like C2-type domain occupies 158–247 (PPLDCGEHHL…LKDQKGTALS (90 aa)). Cysteines 179 and 236 form a disulfide. Residues 287–307 (SFLTVLILLTVLSITGSLIII) traverse the membrane as a helical segment.

It belongs to the Izumo family. Forms a complex with tmem81 and spaca6 on spermatocyte cell membrane. The complex binds to oocyte protein bncr. As to expression, expressed in sperm.

The protein localises to the cell membrane. The protein resides in the cytoplasmic vesicle. Its subcellular location is the secretory vesicle. It is found in the acrosome membrane. Its function is as follows. Essential sperm cell-surface protein required for fertilization by acting as a ligand for bncr receptor on egg. The interaction of the complex izumo1:spaca6:tmemt81 with bncr is a necessary adhesion event between sperm and egg that is required for fertilization. The polypeptide is Izumo sperm-egg fusion protein 1 (Danio rerio (Zebrafish)).